A 146-amino-acid polypeptide reads, in one-letter code: Hemoglobin subunit beta (146 aa).

An N-acetylvaline modification is found at V1. The 145-residue stretch at 2-146 (HLSDGEKNAI…VANALAHKYH (145 aa)) folds into the Globin domain. At S44 the chain carries Phosphoserine. K59 is modified (N6-acetyllysine). H63 is a binding site for heme b. The residue at position 82 (K82) is an N6-acetyllysine. H92 contributes to the heme b binding site. An S-nitrosocysteine modification is found at C93. K144 carries the post-translational modification N6-acetyllysine.

The protein belongs to the globin family. Heterotetramer of two alpha chains and two beta chains. Red blood cells.

Involved in oxygen transport from the lung to the various peripheral tissues. In Spermophilus citellus (European ground squirrel), this protein is Hemoglobin subunit beta (HBB).